The following is a 263-amino-acid chain: Imidazole glycerol phosphate synthase subunit HisF (263 aa).

Catalysis depends on residues Asp-11 and Asp-130.

The protein belongs to the HisA/HisF family. As to quaternary structure, heterodimer of HisH and HisF.

The protein resides in the cytoplasm. It carries out the reaction 5-[(5-phospho-1-deoxy-D-ribulos-1-ylimino)methylamino]-1-(5-phospho-beta-D-ribosyl)imidazole-4-carboxamide + L-glutamine = D-erythro-1-(imidazol-4-yl)glycerol 3-phosphate + 5-amino-1-(5-phospho-beta-D-ribosyl)imidazole-4-carboxamide + L-glutamate + H(+). It functions in the pathway amino-acid biosynthesis; L-histidine biosynthesis; L-histidine from 5-phospho-alpha-D-ribose 1-diphosphate: step 5/9. IGPS catalyzes the conversion of PRFAR and glutamine to IGP, AICAR and glutamate. The HisF subunit catalyzes the cyclization activity that produces IGP and AICAR from PRFAR using the ammonia provided by the HisH subunit. This chain is Imidazole glycerol phosphate synthase subunit HisF, found in Herpetosiphon aurantiacus (strain ATCC 23779 / DSM 785 / 114-95).